Reading from the N-terminus, the 197-residue chain is Recombination protein RecR (197 aa).

The C4-type zinc finger occupies 56-71; the sequence is CRLCNNFSEAEVCEVC. Residues 79–174 enclose the Toprim domain; the sequence is RQLAVVEMPA…KVSRLARGVP (96 aa).

It belongs to the RecR family.

May play a role in DNA repair. It seems to be involved in an RecBC-independent recombinational process of DNA repair. It may act with RecF and RecO. The polypeptide is Recombination protein RecR (Thiobacillus denitrificans (strain ATCC 25259 / T1)).